The primary structure comprises 954 residues: Valine--tRNA ligase (954 aa).

Residues 48–58 (PNVTGSLHMGH) carry the 'HIGH' region motif. The 'KMSKS' region motif lies at 560-564 (KMSKS). An ATP-binding site is contributed by lysine 563. Positions 883–953 (AGFINKEAEL…LKQQYLAIEA (71 aa)) form a coiled coil.

The protein belongs to the class-I aminoacyl-tRNA synthetase family. ValS type 1 subfamily. Monomer.

Its subcellular location is the cytoplasm. It catalyses the reaction tRNA(Val) + L-valine + ATP = L-valyl-tRNA(Val) + AMP + diphosphate. Its function is as follows. Catalyzes the attachment of valine to tRNA(Val). As ValRS can inadvertently accommodate and process structurally similar amino acids such as threonine, to avoid such errors, it has a 'posttransfer' editing activity that hydrolyzes mischarged Thr-tRNA(Val) in a tRNA-dependent manner. This chain is Valine--tRNA ligase, found in Pasteurella multocida (strain Pm70).